The chain runs to 289 residues: Probable ABC transporter permease protein BRA0749/BS1330_II0742 (289 aa).

Transmembrane regions (helical) follow at residues 9 to 29 (FLIL…VVHL), 70 to 90 (VWTV…AIIL), 99 to 119 (VARV…AIVW), 144 to 166 (IQWL…LVTV), 213 to 233 (IAIV…WVMT), and 260 to 280 (EASA…VIYI). The 215-residue stretch at 65-279 (LWRTAVWTVA…AILLVFTVIY (215 aa)) folds into the ABC transmembrane type-1 domain.

The protein belongs to the binding-protein-dependent transport system permease family. In terms of assembly, the complex is composed of two ATP-binding proteins (BRA0745), two transmembrane proteins (BRA0749) and a solute-binding protein (BRA0748).

The protein resides in the cell inner membrane. Its function is as follows. Probably part of an ABC transporter complex. Probably responsible for the translocation of the substrate across the membrane. In Brucella suis biovar 1 (strain 1330), this protein is Probable ABC transporter permease protein BRA0749/BS1330_II0742.